Consider the following 209-residue polypeptide: Thiamine-phosphate synthase (209 aa).

4-amino-2-methyl-5-(diphosphooxymethyl)pyrimidine contacts are provided by residues 38–42 and Asn70; that span reads QYRDK. Residues Asp71 and Asp89 each contribute to the Mg(2+) site. Thr108 contributes to the 4-amino-2-methyl-5-(diphosphooxymethyl)pyrimidine binding site. 135-137 serves as a coordination point for 2-[(2R,5Z)-2-carboxy-4-methylthiazol-5(2H)-ylidene]ethyl phosphate; the sequence is SNT. Residue Lys138 participates in 4-amino-2-methyl-5-(diphosphooxymethyl)pyrimidine binding. Gly165 contacts 2-[(2R,5Z)-2-carboxy-4-methylthiazol-5(2H)-ylidene]ethyl phosphate.

Belongs to the thiamine-phosphate synthase family. It depends on Mg(2+) as a cofactor.

The catalysed reaction is 2-[(2R,5Z)-2-carboxy-4-methylthiazol-5(2H)-ylidene]ethyl phosphate + 4-amino-2-methyl-5-(diphosphooxymethyl)pyrimidine + 2 H(+) = thiamine phosphate + CO2 + diphosphate. It catalyses the reaction 2-(2-carboxy-4-methylthiazol-5-yl)ethyl phosphate + 4-amino-2-methyl-5-(diphosphooxymethyl)pyrimidine + 2 H(+) = thiamine phosphate + CO2 + diphosphate. The enzyme catalyses 4-methyl-5-(2-phosphooxyethyl)-thiazole + 4-amino-2-methyl-5-(diphosphooxymethyl)pyrimidine + H(+) = thiamine phosphate + diphosphate. Its pathway is cofactor biosynthesis; thiamine diphosphate biosynthesis; thiamine phosphate from 4-amino-2-methyl-5-diphosphomethylpyrimidine and 4-methyl-5-(2-phosphoethyl)-thiazole: step 1/1. Functionally, condenses 4-methyl-5-(beta-hydroxyethyl)thiazole monophosphate (THZ-P) and 2-methyl-4-amino-5-hydroxymethyl pyrimidine pyrophosphate (HMP-PP) to form thiamine monophosphate (TMP). The protein is Thiamine-phosphate synthase of Ectopseudomonas mendocina (strain ymp) (Pseudomonas mendocina).